The primary structure comprises 222 residues: CCA-adding enzyme (222 aa).

2 residues coordinate ATP: Ser-50 and Lys-53. 2 residues coordinate CTP: Ser-50 and Lys-53. The Mg(2+) site is built by Asp-61, Asp-63, and Asp-112. 3 residues coordinate ATP: His-135, Lys-155, and Tyr-164. CTP-binding residues include His-135, Lys-155, and Tyr-164.

Belongs to the tRNA nucleotidyltransferase/poly(A) polymerase family. Archaeal CCA-adding enzyme subfamily. Homodimer. Mg(2+) serves as cofactor.

It catalyses the reaction a tRNA precursor + 2 CTP + ATP = a tRNA with a 3' CCA end + 3 diphosphate. It carries out the reaction a tRNA with a 3' CCA end + 2 CTP + ATP = a tRNA with a 3' CCACCA end + 3 diphosphate. In terms of biological role, catalyzes the addition and repair of the essential 3'-terminal CCA sequence in tRNAs without using a nucleic acid template. Adds these three nucleotides in the order of C, C, and A to the tRNA nucleotide-73, using CTP and ATP as substrates and producing inorganic pyrophosphate. tRNA 3'-terminal CCA addition is required both for tRNA processing and repair. Also involved in tRNA surveillance by mediating tandem CCA addition to generate a CCACCA at the 3' terminus of unstable tRNAs. While stable tRNAs receive only 3'-terminal CCA, unstable tRNAs are marked with CCACCA and rapidly degraded. The chain is CCA-adding enzyme from Thermoplasma acidophilum.